Consider the following 95-residue polypeptide: Integration host factor subunit beta (95 aa).

It belongs to the bacterial histone-like protein family. Heterodimer of an alpha and a beta chain.

This protein is one of the two subunits of integration host factor, a specific DNA-binding protein that functions in genetic recombination as well as in transcriptional and translational control. Involved in hydrogenase gene expression. The chain is Integration host factor subunit beta (ihfB) from Rhodobacter capsulatus (Rhodopseudomonas capsulata).